The chain runs to 308 residues: tRNA dimethylallyltransferase (308 aa).

11–18 (GSTATGKS) is a binding site for ATP. 13–18 (TATGKS) contributes to the substrate binding site. Residues 36-39 (DSVQ) are interaction with substrate tRNA.

This sequence belongs to the IPP transferase family. In terms of assembly, monomer. Mg(2+) serves as cofactor.

It catalyses the reaction adenosine(37) in tRNA + dimethylallyl diphosphate = N(6)-dimethylallyladenosine(37) in tRNA + diphosphate. Functionally, catalyzes the transfer of a dimethylallyl group onto the adenine at position 37 in tRNAs that read codons beginning with uridine, leading to the formation of N6-(dimethylallyl)adenosine (i(6)A). This chain is tRNA dimethylallyltransferase, found in Bdellovibrio bacteriovorus (strain ATCC 15356 / DSM 50701 / NCIMB 9529 / HD100).